The primary structure comprises 804 residues: Phenylalanine--tRNA ligase beta subunit (804 aa).

A tRNA-binding domain is found at 39–155; that stretch reads AEGLKKIVVG…ADVKPGEEVY (117 aa). One can recognise a B5 domain in the interval 408–483; that stretch reads RNPSVVKTTV…RIYGYDNLKS (76 aa). Residues aspartate 461, aspartate 467, glutamate 470, and glutamate 471 each contribute to the Mg(2+) site. Residues 711-804 enclose the FDX-ACB domain; it reads PKFPAIERDL…LKESLKIKVR (94 aa).

The protein belongs to the phenylalanyl-tRNA synthetase beta subunit family. Type 1 subfamily. As to quaternary structure, tetramer of two alpha and two beta subunits. Requires Mg(2+) as cofactor.

Its subcellular location is the cytoplasm. It catalyses the reaction tRNA(Phe) + L-phenylalanine + ATP = L-phenylalanyl-tRNA(Phe) + AMP + diphosphate + H(+). The chain is Phenylalanine--tRNA ligase beta subunit from Lactobacillus johnsonii (strain CNCM I-12250 / La1 / NCC 533).